A 397-amino-acid chain; its full sequence is Gamma tubulin complex adapter mto2 (397 aa).

Positions 1-13 (MSEHNYQSDREVA) are enriched in basic and acidic residues. Disordered regions lie at residues 1–44 (MSEH…WRAG), 269–298 (YTSSVDSSPQRMASDSYGRPSLHLNDPFPS), and 346–397 (RSDP…TPSP). Polar residues-rich tracts occupy residues 22–37 (ASANQLSSNSRESTPR), 269–281 (YTSSVDSSPQRMA), 352–369 (RHVSNSTNKSSLHPSPTS), and 382–397 (SPASQSFPSLQDTPSP). A phosphoserine mark is found at Ser-366 and Ser-396.

In terms of assembly, interacts with mto1; the interaction is direct and required for efficient binding to the gamma-tubulin complex. Interacts with gamma tubulin complex subunits alp4, alp6 and gtb1.

The protein resides in the cytoplasm. Its subcellular location is the cytoskeleton. It localises to the microtubule organizing center. It is found in the spindle pole body. In terms of biological role, acts together with mto1 to promote nucleation of at least a subset of cytoplasmic microtubules, by recruiting the gamma-tubulin complex to the interphase microtubule organizing center (iMTOC) and to the equatorial MTOC (eMTOC) during anaphase. Does not appear to be required for cytoplasmic astral microtubule nucleation from the spindle pole body (SPB). Required to establish the eMTOC, and thereby to tether the cytokinetic actin ring. This chain is Gamma tubulin complex adapter mto2, found in Schizosaccharomyces pombe (strain 972 / ATCC 24843) (Fission yeast).